Reading from the N-terminus, the 1359-residue chain is ABC transporter C family member 1 (1359 aa).

An ABC transmembrane type-1 1 domain is found at 111-394 (NKLTIFLQIL…LPNSIQQLQS (284 aa)). Transmembrane regions (helical) follow at residues 119 to 139 (ILTN…IQFI), 147 to 167 (SFLA…SYTF), 214 to 234 (LLSV…MGIF), 244 to 264 (LALL…IMVI), 332 to 352 (MIFW…VLVL), and 363 to 383 (ITLE…IPLL). Residues 409-478 (PEIQQNHSSN…QQQQQQQQQQ (70 aa)) form a disordered region. The segment covering 420 to 433 (EEEEEDEYDDDINS) has biased composition (acidic residues). Positions 440–450 (HNGSFNWNQVD) are enriched in polar residues. Low complexity predominate over residues 459–478 (GNQQQQQQQQQQQQQQQQQQ). Residues 470–690 (QQQQQQQQQQ…IDFESIMKTK (221 aa)) form the ABC transporter 1 domain. 502–509 (GVVGSGKT) contacts ATP. The ABC transmembrane type-1 2 domain occupies 763–1061 (LRVYKEYFKH…LEVKMNSVER (299 aa)). Transmembrane regions (helical) follow at residues 773 to 793 (GSSI…QIIY), 819 to 839 (IYLL…FMMA), 884 to 904 (VDLL…TVLV), 906 to 926 (IGIM…LIGI), and 999 to 1021 (WVAV…FSLF). Positions 1073-1102 (NSKINFFRNEQQEEEEEEEEEFDFDNDDYD) form a coiled coil. Positions 1116-1350 (IEFRNVEIKY…QESRFSKLVK (235 aa)) constitute an ABC transporter 2 domain. 1150-1157 (GRTGAGKS) is an ATP binding site.

This sequence belongs to the ABC transporter superfamily. ABCC family. Conjugate transporter (TC 3.A.1.208) subfamily.

Its subcellular location is the membrane. This Dictyostelium discoideum (Social amoeba) protein is ABC transporter C family member 1 (abcC1).